A 396-amino-acid chain; its full sequence is Elongation factor Tu (396 aa).

Positions 11–205 (KPHVNIGTIG…VVDEYIPTPE (195 aa)) constitute a tr-type G domain. The G1 stretch occupies residues 20 to 27 (GHVDHGKT). 20–27 (GHVDHGKT) provides a ligand contact to GTP. Residue T27 participates in Mg(2+) binding. A G2 region spans residues 61–65 (GITIN). Positions 82 to 85 (DAPG) are G3. GTP contacts are provided by residues 82–86 (DAPGH) and 137–140 (NKCD). Residues 137–140 (NKCD) are G4. A G5 region spans residues 175-177 (SAL).

Belongs to the TRAFAC class translation factor GTPase superfamily. Classic translation factor GTPase family. EF-Tu/EF-1A subfamily. Monomer.

It localises to the cytoplasm. It catalyses the reaction GTP + H2O = GDP + phosphate + H(+). Functionally, GTP hydrolase that promotes the GTP-dependent binding of aminoacyl-tRNA to the A-site of ribosomes during protein biosynthesis. The polypeptide is Elongation factor Tu (Lactobacillus delbrueckii subsp. bulgaricus (strain ATCC 11842 / DSM 20081 / BCRC 10696 / JCM 1002 / NBRC 13953 / NCIMB 11778 / NCTC 12712 / WDCM 00102 / Lb 14)).